Reading from the N-terminus, the 85-residue chain is Large ribosomal subunit protein bL31B (85 aa).

This sequence belongs to the bacterial ribosomal protein bL31 family. Type B subfamily. As to quaternary structure, part of the 50S ribosomal subunit.

The sequence is that of Large ribosomal subunit protein bL31B from Bifidobacterium longum subsp. infantis (strain ATCC 15697 / DSM 20088 / JCM 1222 / NCTC 11817 / S12).